A 310-amino-acid polypeptide reads, in one-letter code: Ferredoxin--NADP reductase (310 aa).

FAD contacts are provided by Asp26, Gln34, Tyr39, Val78, Phe108, Asp268, and Thr308.

Belongs to the ferredoxin--NADP reductase type 2 family. In terms of assembly, homodimer. It depends on FAD as a cofactor.

The enzyme catalyses 2 reduced [2Fe-2S]-[ferredoxin] + NADP(+) + H(+) = 2 oxidized [2Fe-2S]-[ferredoxin] + NADPH. The chain is Ferredoxin--NADP reductase from Lactobacillus helveticus (strain DPC 4571).